The following is a 155-amino-acid chain: Ribosome maturation factor RimP (155 aa).

This sequence belongs to the RimP family.

Its subcellular location is the cytoplasm. In terms of biological role, required for maturation of 30S ribosomal subunits. In Gemmatimonas aurantiaca (strain DSM 14586 / JCM 11422 / NBRC 100505 / T-27), this protein is Ribosome maturation factor RimP.